The sequence spans 169 residues: Peptide deformylase (169 aa).

Residues C94 and H136 each contribute to the Fe cation site. The active site involves E137. H140 contacts Fe cation.

It belongs to the polypeptide deformylase family. Requires Fe(2+) as cofactor.

The catalysed reaction is N-terminal N-formyl-L-methionyl-[peptide] + H2O = N-terminal L-methionyl-[peptide] + formate. In terms of biological role, removes the formyl group from the N-terminal Met of newly synthesized proteins. Requires at least a dipeptide for an efficient rate of reaction. N-terminal L-methionine is a prerequisite for activity but the enzyme has broad specificity at other positions. In Desulfotalea psychrophila (strain LSv54 / DSM 12343), this protein is Peptide deformylase.